We begin with the raw amino-acid sequence, 873 residues long: Zinc finger X-linked protein ZXDB (873 aa).

Disordered stretches follow at residues 1–23 (MEIP…GCPA), 48–120 (RGAQ…GGSR), 138–184 (VETV…LSAV), 240–259 (EPGV…GALI), and 301–330 (AEPA…GPAG). 2 stretches are compositionally biased toward gly residues: residues 14 to 23 (QGAGGGGCPA) and 85 to 120 (SGGG…GGSR). The residue at position 89 (R89) is an Omega-N-methylarginine. The span at 150 to 165 (VRREEAGAGPRPERRQ) shows a compositional bias: basic and acidic residues. Positions 240 to 255 (EPGVAPFPQPQPPPQP) are enriched in pro residues. Residues 316 to 327 (APAAAAAQSPRG) are compositionally biased toward low complexity. C2H2-type zinc fingers lie at residues 340-364 (YLCP…LLTH), 373-397 (FKCP…LQSH), 403-427 (FGCP…MKGH), 433-455 (FKCE…QRSH), 462-486 (YQCA…NRAH), 493-517 (FACS…LRSH), 523-547 (FLCD…KRKH), 553-577 (FTCP…SITH), 583-607 (FVCP…SKKH), and 616-641 (SRCP…TKRH). Residues 340 to 646 (YLCPEAQCGQ…MTKRHNLSQD (307 aa)) are required for interaction with ZXDC. The tract at residues 645–776 (QDLLAQLEAA…DMDDVSAGNV (132 aa)) is required for transcriptional activation.

This sequence belongs to the ZXD family. As to quaternary structure, self-associates. Interacts with ZXDC and CIITA.

The protein localises to the nucleus. In terms of biological role, cooperates with CIITA to promote transcription of MHC class I and MHC class II genes. The sequence is that of Zinc finger X-linked protein ZXDB (Zxdb) from Mus musculus (Mouse).